A 408-amino-acid polypeptide reads, in one-letter code: Tripartite motif-containing protein 59 (408 aa).

An RING-type zinc finger spans residues 10–60 (CSICYSLFEDPRVLPCSHTFCRSCLEGVIQLSSNFSIWRPLRVPLKCPNCR). The B box-type zinc finger occupies 92-134 (SDVATCSEHYRQPLNVYCLLDKKLVCGHCLTIGKHNGHPIDDL). Positions 97, 100, 120, and 126 each coordinate Zn(2+). Residues 163 to 247 (LIEKLKEQKA…LNTSIQKEES (85 aa)) are a coiled coil. A helical transmembrane segment spans residues 333-353 (ANPLSVTFIFTVIIAIAVLSF).

It belongs to the TRIM/RBCC family. As to quaternary structure, interacts with ECSIT.

The protein resides in the endoplasmic reticulum membrane. Its function is as follows. May serve as a multifunctional regulator for innate immune signaling pathways. The sequence is that of Tripartite motif-containing protein 59 (TRIM59) from Gallus gallus (Chicken).